Here is a 134-residue protein sequence, read N- to C-terminus: Fluoride-specific ion channel FluC (134 aa).

4 consecutive transmembrane segments (helical) span residues 7–27 (LAVAIGGSLGAMSRYLVTIMA), 38–58 (GTLLVNTLGSFLAGFFLIVLV), 69–89 (LFLFTGFLGAFTTFSSFAAES), and 110–130 (VGSLSMVFIGTLVAKYVLLGH). Na(+)-binding residues include Gly-77 and Thr-80.

This sequence belongs to the fluoride channel Fluc/FEX (TC 1.A.43) family.

The protein resides in the cell inner membrane. The enzyme catalyses fluoride(in) = fluoride(out). Its activity is regulated as follows. Na(+) is not transported, but it plays an essential structural role and its presence is essential for fluoride channel function. Fluoride-specific ion channel. Important for reducing fluoride concentration in the cell, thus reducing its toxicity. The polypeptide is Fluoride-specific ion channel FluC (Legionella pneumophila subsp. pneumophila (strain Philadelphia 1 / ATCC 33152 / DSM 7513)).